The chain runs to 347 residues: D-fructose 1,6-bisphosphatase class 2/sedoheptulose 1,7-bisphosphatase (347 aa).

Positions 33, 57, 97, and 100 each coordinate Mn(2+). Substrate is bound by residues 100-102, Y131, 176-178, and 198-200; these read EGT, RKR, and DGD. Position 225 (E225) interacts with Mn(2+).

The protein belongs to the FBPase class 2 family. Homotetramer. Mn(2+) serves as cofactor.

It catalyses the reaction beta-D-fructose 1,6-bisphosphate + H2O = beta-D-fructose 6-phosphate + phosphate. It carries out the reaction D-sedoheptulose 1,7-bisphosphate + H2O = D-sedoheptulose 7-phosphate + phosphate. It participates in carbohydrate biosynthesis; Calvin cycle. Catalyzes the hydrolysis of fructose 1,6-bisphosphate (Fru 1,6-P2) and sedoheptulose 1,7-bisphosphate (Sed 1,7-P2) to fructose 6-phosphate and sedoheptulose 7-phosphate, respectively. This Synechococcus sp. (strain JA-3-3Ab) (Cyanobacteria bacterium Yellowstone A-Prime) protein is D-fructose 1,6-bisphosphatase class 2/sedoheptulose 1,7-bisphosphatase.